The chain runs to 644 residues: 1-deoxy-D-xylulose-5-phosphate synthase (644 aa).

Thiamine diphosphate-binding positions include His-78 and 120–122; that span reads GHA. Position 149 (Asp-149) interacts with Mg(2+). Residues 150–151, Asn-178, and Glu-373 each bind thiamine diphosphate; that span reads AA. Residue Asn-178 participates in Mg(2+) binding.

The protein belongs to the transketolase family. DXPS subfamily. Homodimer. Mg(2+) is required as a cofactor. Requires thiamine diphosphate as cofactor.

The catalysed reaction is D-glyceraldehyde 3-phosphate + pyruvate + H(+) = 1-deoxy-D-xylulose 5-phosphate + CO2. It functions in the pathway metabolic intermediate biosynthesis; 1-deoxy-D-xylulose 5-phosphate biosynthesis; 1-deoxy-D-xylulose 5-phosphate from D-glyceraldehyde 3-phosphate and pyruvate: step 1/1. Catalyzes the acyloin condensation reaction between C atoms 2 and 3 of pyruvate and glyceraldehyde 3-phosphate to yield 1-deoxy-D-xylulose-5-phosphate (DXP). This Chlamydia felis (strain Fe/C-56) (Chlamydophila felis) protein is 1-deoxy-D-xylulose-5-phosphate synthase.